We begin with the raw amino-acid sequence, 530 residues long: Ubiquitin carboxyl-terminal hydrolase 17-like protein 10 (530 aa).

In terms of domain architecture, USP spans 80–375 (AGLQNMGNTC…QAYVLFYIQK (296 aa)). The active-site Nucleophile is cysteine 89. The Proton acceptor role is filled by histidine 334. 2 stretches are compositionally biased toward basic and acidic residues: residues 382–392 (SESVSRGREPR) and 398–410 (DTDR…ELKR). Disordered regions lie at residues 382-410 (SESV…ELKR) and 477-530 (NHHP…LVCQ). The segment covering 484-495 (SSLLNLSSTTPT) has biased composition (low complexity). The segment covering 496–505 (DQESMNTGTL) has biased composition (polar residues). Basic residues predominate over residues 510–524 (GRTRRSKGKNKHSKR).

It belongs to the peptidase C19 family. USP17 subfamily.

The protein resides in the nucleus. It is found in the endoplasmic reticulum. It carries out the reaction Thiol-dependent hydrolysis of ester, thioester, amide, peptide and isopeptide bonds formed by the C-terminal Gly of ubiquitin (a 76-residue protein attached to proteins as an intracellular targeting signal).. Its function is as follows. Deubiquitinating enzyme that removes conjugated ubiquitin from specific proteins to regulate different cellular processes that may include cell proliferation, progression through the cell cycle, apoptosis, cell migration, and the cellular response to viral infection. The chain is Ubiquitin carboxyl-terminal hydrolase 17-like protein 10 (USP17L10) from Homo sapiens (Human).